The following is a 235-amino-acid chain: Proteasome subunit alpha type-2-B (235 aa).

K64 is covalently cross-linked (Glycyl lysine isopeptide (Lys-Gly) (interchain with G-Cter in ubiquitin)).

The protein belongs to the peptidase T1A family. In terms of assembly, component of the 20S core complex of the 26S proteasome. The 26S proteasome is composed of a core protease (CP), known as the 20S proteasome, capped at one or both ends by the 19S regulatory particle (RP/PA700). The 20S proteasome core is composed of 28 subunits that are arranged in four stacked rings, resulting in a barrel-shaped structure. The two end rings are each formed by seven alpha subunits, and the two central rings are each formed by seven beta subunits. The catalytic chamber with the active sites is on the inside of the barrel.

It localises to the cytoplasm. The protein localises to the nucleus. Its function is as follows. The proteasome is a multicatalytic proteinase complex which is characterized by its ability to cleave peptides with Arg, Phe, Tyr, Leu, and Glu adjacent to the leaving group at neutral or slightly basic pH. The proteasome has an ATP-dependent proteolytic activity. This Arabidopsis thaliana (Mouse-ear cress) protein is Proteasome subunit alpha type-2-B (PAB2).